Here is an 87-residue protein sequence, read N- to C-terminus: U18-myrmicitoxin-Mri1a (87 aa).

An N-terminal signal peptide occupies residues 1-32 (MKNNYNRINTFIVYLMVTFSLISIISITECTP). One can recognise an EGF-like domain in the interval 33 to 77 (NHDPCPPQYAEALCLNGGTCFSVTIMGSDNYNCICAPGFRGWRCQ). 3 disulfides stabilise this stretch: Cys-37-Cys-52, Cys-46-Cys-65, and Cys-67-Cys-76.

In terms of processing, O-glycosylated. As to expression, expressed by the venom gland.

Its subcellular location is the secreted. The protein is U18-myrmicitoxin-Mri1a of Manica rubida (European giant red ant).